Reading from the N-terminus, the 231-residue chain is 5'-methylthioadenosine/S-adenosylhomocysteine nucleosidase (231 aa).

Catalysis depends on Glu12, which acts as the Proton acceptor. Substrate contacts are provided by residues Gly78, Val153, and Met174–Glu175. Catalysis depends on Asp198, which acts as the Proton donor.

Belongs to the PNP/UDP phosphorylase family. MtnN subfamily.

The enzyme catalyses S-adenosyl-L-homocysteine + H2O = S-(5-deoxy-D-ribos-5-yl)-L-homocysteine + adenine. It catalyses the reaction S-methyl-5'-thioadenosine + H2O = 5-(methylsulfanyl)-D-ribose + adenine. It carries out the reaction 5'-deoxyadenosine + H2O = 5-deoxy-D-ribose + adenine. It participates in amino-acid biosynthesis; L-methionine biosynthesis via salvage pathway; S-methyl-5-thio-alpha-D-ribose 1-phosphate from S-methyl-5'-thioadenosine (hydrolase route): step 1/2. In terms of biological role, catalyzes the irreversible cleavage of the glycosidic bond in both 5'-methylthioadenosine (MTA) and S-adenosylhomocysteine (SAH/AdoHcy) to adenine and the corresponding thioribose, 5'-methylthioribose and S-ribosylhomocysteine, respectively. Also cleaves 5'-deoxyadenosine, a toxic by-product of radical S-adenosylmethionine (SAM) enzymes, into 5-deoxyribose and adenine. The sequence is that of 5'-methylthioadenosine/S-adenosylhomocysteine nucleosidase from Vibrio vulnificus (strain CMCP6).